A 440-amino-acid chain; its full sequence is Phenylacetate-coenzyme A ligase (440 aa).

It belongs to the phenylacetyl-CoA ligase family. As to quaternary structure, monomer.

The catalysed reaction is 2-phenylacetate + ATP + CoA = phenylacetyl-CoA + AMP + diphosphate. It participates in aromatic compound metabolism; phenylacetate degradation. With respect to regulation, inhibition of activity is observed in the presence of a 1 mM of the divalent cations zinc, copper, and nickel. Functionally, catalyzes the activation of phenylacetic acid (PA) to phenylacetyl-CoA (PA-CoA). Involved in the phenylalanine metabolism. This Aromatoleum evansii (Azoarcus evansii) protein is Phenylacetate-coenzyme A ligase (paaK).